Reading from the N-terminus, the 308-residue chain is MKSIKRFALSAMGAAMLLVLTGCVNVDKTTGQPTGFIWNTIGAPMAEAIKYFATDKGLGFGVAIIIVTIIVRLIILPLGIYQSWKATLHSEKMNALKHVLEPHQTRLKEATTQEEKLEAQQALFAAQKEHGISMFGGVGCFPILLQMPFFSAIYFAAQHTEGVAQASYLGIPLGSPSMILVACAGVLYYLQSLLSLHGVEDEMQREQIKKMIYMSPLMIVVFSLFSPASVTLYWVVGGFMMILQQFIVNYIVRPKLRKKVHEELAKNPSKASAFSTPSGRKDVTPEQPTAITSKKKHKNRNAGKQRSR.

The N-terminal stretch at 1-22 (MKSIKRFALSAMGAAMLLVLTG) is a signal peptide. A lipid anchor (N-palmitoyl cysteine) is attached at Cys23. Cys23 carries S-diacylglycerol cysteine lipidation. 5 consecutive transmembrane segments (helical) span residues 60–80 (FGVAIIIVTIIVRLIILPLGI), 135–155 (FGGVGCFPILLQMPFFSAIYF), 168–188 (YLGIPLGSPSMILVACAGVLY), 211–225 (MIYMSPLMIVVFSLF), and 230–252 (VTLYWVVGGFMMILQQFIVNYIV). The disordered stretch occupies residues 263 to 308 (ELAKNPSKASAFSTPSGRKDVTPEQPTAITSKKKHKNRNAGKQRSR). Positions 269-278 (SKASAFSTPS) are enriched in polar residues. Residues 293 to 308 (SKKKHKNRNAGKQRSR) show a composition bias toward basic residues.

Belongs to the OXA1/ALB3/YidC family. Type 2 subfamily.

It is found in the cell membrane. Its function is as follows. Required for the insertion and/or proper folding and/or complex formation of integral membrane proteins into the membrane. Involved in integration of membrane proteins that insert both dependently and independently of the Sec translocase complex, as well as at least some lipoproteins. The polypeptide is Membrane protein insertase YidC 1 (Streptococcus pneumoniae (strain ATCC BAA-255 / R6)).